Reading from the N-terminus, the 72-residue chain is Cytochrome c oxidase subunit 2 (72 aa).

Over 1–14 (MAHPSQLGFQDAAS) the chain is Mitochondrial intermembrane. A helical membrane pass occupies residues 15-45 (PVMEELLHFHDHALMIVFLISTLVLYIIVAM). Topologically, residues 46–72 (VSTKLTNKHILDSQEVEIVWTILPAVI) are mitochondrial matrix.

Belongs to the cytochrome c oxidase subunit 2 family. In terms of assembly, component of the cytochrome c oxidase (complex IV, CIV), a multisubunit enzyme composed of 14 subunits. The complex is composed of a catalytic core of 3 subunits MT-CO1, MT-CO2 and MT-CO3, encoded in the mitochondrial DNA, and 11 supernumerary subunits COX4I, COX5A, COX5B, COX6A, COX6B, COX6C, COX7A, COX7B, COX7C, COX8 and NDUFA4, which are encoded in the nuclear genome. The complex exists as a monomer or a dimer and forms supercomplexes (SCs) in the inner mitochondrial membrane with NADH-ubiquinone oxidoreductase (complex I, CI) and ubiquinol-cytochrome c oxidoreductase (cytochrome b-c1 complex, complex III, CIII), resulting in different assemblies (supercomplex SCI(1)III(2)IV(1) and megacomplex MCI(2)III(2)IV(2)). Found in a complex with TMEM177, COA6, COX18, COX20, SCO1 and SCO2. Interacts with TMEM177 in a COX20-dependent manner. Interacts with COX20. Interacts with COX16. The cofactor is Cu cation.

It localises to the mitochondrion inner membrane. The catalysed reaction is 4 Fe(II)-[cytochrome c] + O2 + 8 H(+)(in) = 4 Fe(III)-[cytochrome c] + 2 H2O + 4 H(+)(out). Its function is as follows. Component of the cytochrome c oxidase, the last enzyme in the mitochondrial electron transport chain which drives oxidative phosphorylation. The respiratory chain contains 3 multisubunit complexes succinate dehydrogenase (complex II, CII), ubiquinol-cytochrome c oxidoreductase (cytochrome b-c1 complex, complex III, CIII) and cytochrome c oxidase (complex IV, CIV), that cooperate to transfer electrons derived from NADH and succinate to molecular oxygen, creating an electrochemical gradient over the inner membrane that drives transmembrane transport and the ATP synthase. Cytochrome c oxidase is the component of the respiratory chain that catalyzes the reduction of oxygen to water. Electrons originating from reduced cytochrome c in the intermembrane space (IMS) are transferred via the dinuclear copper A center (CU(A)) of subunit 2 and heme A of subunit 1 to the active site in subunit 1, a binuclear center (BNC) formed by heme A3 and copper B (CU(B)). The BNC reduces molecular oxygen to 2 water molecules using 4 electrons from cytochrome c in the IMS and 4 protons from the mitochondrial matrix. This chain is Cytochrome c oxidase subunit 2 (mt-co2), found in Atractosteus spatula (Alligator gar).